The following is a 147-amino-acid chain: Protein disulfide isomerase-like 5-1 (147 aa).

An N-terminal signal peptide occupies residues 1–29; that stretch reads MDLAPGRRARLLVALALVVLVALAARSGA. The 108-residue stretch at 30–137 folds into the Thioredoxin domain; it reads EVITLTEETF…LKNFVSDEAE (108 aa). Residues Cys-59 and Cys-62 each act as nucleophile in the active site. A disulfide bridge connects residues Cys-59 and Cys-62.

The protein belongs to the protein disulfide isomerase family.

In terms of biological role, acts as a protein-folding catalyst that interacts with nascent polypeptides to catalyze the formation, isomerization, and reduction or oxidation of disulfide bonds. May play a role in storage protein biogenesis. The protein is Protein disulfide isomerase-like 5-1 (PDIL5-1) of Oryza sativa subsp. japonica (Rice).